Here is a 183-residue protein sequence, read N- to C-terminus: Translocon-associated protein subunit beta (183 aa).

The first 17 residues, 1-17 (MRLLAVVVLALLAVSQA), serve as a signal peptide directing secretion. Over 18–146 (EEGARLLASK…REFDRRFSPH (129 aa)) the chain is Lumenal. Residue Asn88 is glycosylated (N-linked (GlcNAc...) (high mannose) asparagine). Asn104 is a glycosylation site (N-linked (GlcNAc...) asparagine). A helical membrane pass occupies residues 147 to 167 (FLDWAAFGVMTLPSIGIPLLL). Residues 168 to 183 (WYSSKRKYDTPKPKKN) are Cytoplasmic-facing.

The protein belongs to the TRAP-beta family. Heterotetramer of TRAP-alpha, TRAP-beta, TRAP-delta and TRAP-gamma. Interacts with STING1.

Its subcellular location is the endoplasmic reticulum membrane. Functionally, TRAP proteins are part of a complex whose function is to bind calcium to the ER membrane and thereby regulate the retention of ER resident proteins. In Mus musculus (Mouse), this protein is Translocon-associated protein subunit beta (Ssr2).